The primary structure comprises 248 residues: tRNA N(3)-methylcytidine methyltransferase trm141 (248 aa).

S-adenosyl-L-methionine contacts are provided by W23, Y27, G63, D86, D112, and I133.

It belongs to the methyltransferase superfamily. METL family.

The protein resides in the cytoplasm. Its subcellular location is the nucleus. It catalyses the reaction cytidine(32) in tRNA(Ser) + S-adenosyl-L-methionine = N(3)-methylcytidine(32) in tRNA(Ser) + S-adenosyl-L-homocysteine + H(+). S-adenosyl-L-methionine-dependent methyltransferase that mediates N(3)-methylcytidine modification of residue 32 of the tRNA anticodon loop of tRNA(Ser). N(3)-methylcytidine methylation by trm141 requires the formation of N(6)-dimethylallyladenosine(37) (i6A37) by tit1 as prerequisite. Does not catalyze N(3)-methylcytidine modification of tRNA(Thr). This is tRNA N(3)-methylcytidine methyltransferase trm141 from Schizosaccharomyces pombe (strain 972 / ATCC 24843) (Fission yeast).